The primary structure comprises 246 residues: Polyhedrin (246 aa).

The protein belongs to the polyhedrin family.

Functionally, major component of the virus occlusion bodies, which are large proteinaceous structures (polyhedra), that protect the virus from the outside environment for extended periods until they are ingested by insect larvae. This Lepidoptera (butterflies and moths) protein is Polyhedrin (PH).